The primary structure comprises 469 residues: Sulfate adenylyltransferase subunit 1 (469 aa).

The region spanning 22 to 224 (KDLMRFITCG…NMTWYPGSPL (203 aa)) is the tr-type G domain. Residues 31–38 (GSVDDGKS) are G1. A GTP-binding site is contributed by 31–38 (GSVDDGKS). Positions 89–93 (GITID) are G2. The tract at residues 110–113 (DTPG) is G3. GTP contacts are provided by residues 110-114 (DTPGH) and 165-168 (NKMD). The tract at residues 165–168 (NKMD) is G4. The tract at residues 202–204 (SAL) is G5.

It belongs to the TRAFAC class translation factor GTPase superfamily. Classic translation factor GTPase family. CysN/NodQ subfamily. As to quaternary structure, heterodimer composed of CysD, the smaller subunit, and CysN.

It carries out the reaction sulfate + ATP + H(+) = adenosine 5'-phosphosulfate + diphosphate. It participates in sulfur metabolism; hydrogen sulfide biosynthesis; sulfite from sulfate: step 1/3. Its function is as follows. With CysD forms the ATP sulfurylase (ATPS) that catalyzes the adenylation of sulfate producing adenosine 5'-phosphosulfate (APS) and diphosphate, the first enzymatic step in sulfur assimilation pathway. APS synthesis involves the formation of a high-energy phosphoric-sulfuric acid anhydride bond driven by GTP hydrolysis by CysN coupled to ATP hydrolysis by CysD. This Psychromonas ingrahamii (strain DSM 17664 / CCUG 51855 / 37) protein is Sulfate adenylyltransferase subunit 1.